A 385-amino-acid polypeptide reads, in one-letter code: Zinc finger protein B385R (385 aa).

2 consecutive C2H2-type zinc fingers follow at residues 166–190 (LQCP…FYNH) and 168–190 (CPNC…FYNH).

It belongs to the asfivirus B385R family.

The polypeptide is Zinc finger protein B385R (African swine fever virus (isolate Tick/Malawi/Lil 20-1/1983) (ASFV)).